The chain runs to 677 residues: MLGSLVSKRTAPAPRLLLQLLRSPSLRSHESATGQSVTTGGRGEPQWLRAAVGGRHGTSPALLTGGGAATGGRQRGRTETPCLAAATWGRLPSPEDTLPGQDSWNGVLSRAGLGVWALATALVVHCYSKSPSSKDAALMEAARANNVQEVSRLLSEGADVNARHRLGWTALMVAAINRNDSVVQVLLAAGADPNLGDDFSSVYKTAKDQGIHSLEVLVTREDDFNNRLNNRASFKGCTALHYAVLADDYRTVKELLDGGANPLQRNEMGHTPLDYAREGEVMKLLRTSETKYQEKQRKREAEERRRFPLEQRLKEHIIGQESAIATVGAAIRRKENGWYDEEHPLVFLFLGSSGIGKTELAKQTAKYMHKDAKKGFIRLDMSEFQERHEVAKFIGSPPGYIGHEEGGQLTKKLKQCPNAVVLFDEVDKAHPDVLTIMLQLFDEGRLTDGKGKTIDCKDAIFIMTSNVASDEIAQHALQLRQEALEMSRNRIAENLGDVQISDKITISKNFKENVIRPILKAHFRRDEFLGRINEIVYFLPFCHSELIQLVNKELNFWAKRAKQRHNITLLWDREVADVLVEGYNVHYGARSIKHEVERRVVNQLAAAYEQDLLPGGCTLRITVEDSDKQLLRSPELSSSQAERRPPKLRLEIIDKDSKTHKLDIQAPLHPEKVCHTL.

A mitochondrion-targeting transit peptide spans Met-1 to Ser-28. An autoinhibitory region spans residues Pro-92–Cys-126. ANK repeat units follow at residues Ser-133–Ala-162, Leu-166–Leu-195, Lys-235–Arg-265, and Met-268–Arg-297. 10 residues coordinate ATP: His-316, Ile-318, Ser-353, Gly-354, Ile-355, Gly-356, Lys-357, Thr-358, Glu-425, and Asn-466. The segment at Leu-477–Thr-505 is regulatory; slows ATPase and disaggregase activities. Arg-531 contacts ATP. Lys-559 carries the post-translational modification N6-acetyllysine. Arg-590 serves as a coordination point for ATP.

The protein belongs to the ClpA/ClpB family. In terms of assembly, homododecamer when substrate-bound; the homododecamer consists of 2 homohexamers stacked head-to-head via ANK repeat-mediated interactions. The active substrate-bound form is likely to exist in a dynamic equilibrium between homohexamers and homododecamers. Homotetradecamer in the unbound state which is remodeled upon substrate binding into the homododecamer. Interacts with PHB and PHB2. Interacts with MAVS; the interaction is enhanced by Sendai virus infection. Proteolytically cleaved by protease PARL. ATP-dependent protein disaggregase activity is stimulated by PARL-mediated cleavage of the N-terminal autoinhibitory peptide.

The protein localises to the mitochondrion intermembrane space. It carries out the reaction ATP + H2O = ADP + phosphate + H(+). Its activity is regulated as follows. Disaggregase activity is inhibited by ADP. Functionally, functions as a regulatory ATPase and participates in secretion/protein trafficking process. Has ATP-dependent protein disaggregase activity and is required to maintain the solubility of key mitochondrial proteins. Involved in mitochondrial-mediated antiviral innate immunity, activates RIG-I-mediated signal transduction and production of IFNB1 and pro-inflammatory cytokine IL6. Plays a role in granulocyte differentiation. The sequence is that of Mitochondrial disaggregase from Bos taurus (Bovine).